A 659-amino-acid polypeptide reads, in one-letter code: Threonine--tRNA ligase (659 aa).

The TGS domain occupies 1–60 (MTVYLPDGKPLELPEGATAKDVARALGEGWERRAVGAIVDGELYDLLKPLPQGAKVRLLT). The tract at residues 252 to 552 (DHRRLGRELE…LIEHFAGDFP (301 aa)) is catalytic. 3 residues coordinate Zn(2+): Cys349, His400, and His529.

The protein belongs to the class-II aminoacyl-tRNA synthetase family. Homodimer. The cofactor is Zn(2+).

The protein resides in the cytoplasm. The enzyme catalyses tRNA(Thr) + L-threonine + ATP = L-threonyl-tRNA(Thr) + AMP + diphosphate + H(+). Its function is as follows. Catalyzes the attachment of threonine to tRNA(Thr) in a two-step reaction: L-threonine is first activated by ATP to form Thr-AMP and then transferred to the acceptor end of tRNA(Thr). Also edits incorrectly charged L-seryl-tRNA(Thr). The protein is Threonine--tRNA ligase of Thermus thermophilus (strain ATCC BAA-163 / DSM 7039 / HB27).